We begin with the raw amino-acid sequence, 40 residues long: uncharacterized protein (40 aa).

This is an uncharacterized protein from Saccharomyces cerevisiae (strain ATCC 204508 / S288c) (Baker's yeast).